Consider the following 349-residue polypeptide: S-adenosylmethionine:tRNA ribosyltransferase-isomerase (349 aa).

The protein belongs to the QueA family. In terms of assembly, monomer.

The protein resides in the cytoplasm. It catalyses the reaction 7-aminomethyl-7-carbaguanosine(34) in tRNA + S-adenosyl-L-methionine = epoxyqueuosine(34) in tRNA + adenine + L-methionine + 2 H(+). The protein operates within tRNA modification; tRNA-queuosine biosynthesis. Transfers and isomerizes the ribose moiety from AdoMet to the 7-aminomethyl group of 7-deazaguanine (preQ1-tRNA) to give epoxyqueuosine (oQ-tRNA). This is S-adenosylmethionine:tRNA ribosyltransferase-isomerase from Ruegeria sp. (strain TM1040) (Silicibacter sp.).